The chain runs to 86 residues: Protein Tat (86 aa).

The interaction with human CREBBP stretch occupies residues 1-24; sequence MDPVDPNQEPWNHPGSQPRTACNN. The transactivation stretch occupies residues 1–48; the sequence is MDPVDPNQEPWNHPGSQPRTACNNCYCKKCCYHCQLCFLKKGLGIYYG. Residues Cys-22, Cys-25, and Cys-27 each coordinate Zn(2+). The interval 22-37 is cysteine-rich; sequence CNNCYCKKCCYHCQLC. Lys-28 bears the N6-acetyllysine; by host PCAF mark. The Zn(2+) site is built by Cys-30, His-33, Cys-34, and Cys-37. A core region spans residues 38–48; sequence FLKKGLGIYYG. A compositionally biased stretch (basic residues) spans 48–58; the sequence is GRKKRRQRRGT. Residues 48–86 are disordered; sequence GRKKRRQRRGTPKSLQDHQTLIPKQPLSRTSGDPTGPEK. A Nuclear localization signal, RNA-binding (TAR), and protein transduction motif is present at residues 49-57; it reads RKKRRQRRG. Residues 49–86 form an interaction with the host capping enzyme RNGTT region; the sequence is RKKRRQRRGTPKSLQDHQTLIPKQPLSRTSGDPTGPEK. Lys-50 and Lys-51 each carry N6-acetyllysine; by host EP300 and GCN5L2. Asymmetric dimethylarginine; by host PRMT6 occurs at positions 52 and 53. A Glycyl lysine isopeptide (Lys-Gly) (interchain with G-Cter in ubiquitin) cross-link involves residue Lys-71.

The protein belongs to the lentiviruses Tat family. As to quaternary structure, interacts with host CCNT1. Associates with the P-TEFb complex composed at least of Tat, P-TEFb (CDK9 and CCNT1), TAR RNA, RNA Pol II. Recruits the HATs CREBBP, TAF1/TFIID, EP300, PCAF and GCN5L2. Interacts with host KAT5/Tip60; this interaction targets the latter to degradation. Interacts with the host deacetylase SIRT1. Interacts with host capping enzyme RNGTT; this interaction stimulates RNGTT. Binds to host KDR, and to the host integrins ITGAV/ITGB3 and ITGA5/ITGB1. Interacts with host KPNB1/importin beta-1 without previous binding to KPNA1/importin alpha-1. Interacts with EIF2AK2. Interacts with host nucleosome assembly protein NAP1L1; this interaction may be required for the transport of Tat within the nucleus, since the two proteins interact at the nuclear rim. Interacts with host C1QBP/SF2P32; this interaction involves lysine-acetylated Tat. Interacts with the host chemokine receptors CCR2, CCR3 and CXCR4. Interacts with host DPP4/CD26; this interaction may trigger an anti-proliferative effect. Interacts with host LDLR. Interacts with the host extracellular matrix metalloproteinase MMP1. Interacts with host PRMT6; this interaction mediates Tat's methylation. Interacts with, and is ubiquitinated by MDM2/Hdm2. Interacts with host PSMC3 and HTATIP2. Interacts with STAB1; this interaction may overcome SATB1-mediated repression of IL2 and IL2RA (interleukin) in T cells by binding to the same domain than HDAC1. Interacts (when acetylated) with human CDK13, thereby increasing HIV-1 mRNA splicing and promoting the production of the doubly spliced HIV-1 protein Nef. Interacts with host TBP; this interaction modulates the activity of transcriptional pre-initiation complex. Interacts with host RELA. Interacts with host PLSCR1; this interaction negatively regulates Tat transactivation activity by altering its subcellular distribution. Asymmetrical arginine methylation by host PRMT6 seems to diminish the transactivation capacity of Tat and affects the interaction with host CCNT1. In terms of processing, acetylation by EP300, CREBBP, GCN5L2/GCN5 and PCAF regulates the transactivation activity of Tat. EP300-mediated acetylation of Lys-50 promotes dissociation of Tat from the TAR RNA through the competitive binding to PCAF's bromodomain. In addition, the non-acetylated Tat's N-terminus can also interact with PCAF. PCAF-mediated acetylation of Lys-28 enhances Tat's binding to CCNT1. Lys-50 is deacetylated by SIRT1. Post-translationally, polyubiquitination by host MDM2 does not target Tat to degradation, but activates its transactivation function and fosters interaction with CCNT1 and TAR RNA. Phosphorylated by EIF2AK2 on serine and threonine residues adjacent to the basic region important for TAR RNA binding and function. Phosphorylation of Tat by EIF2AK2 is dependent on the prior activation of EIF2AK2 by dsRNA.

The protein resides in the host nucleus. Its subcellular location is the host nucleolus. The protein localises to the host cytoplasm. It is found in the secreted. In terms of biological role, transcriptional activator that increases RNA Pol II processivity, thereby increasing the level of full-length viral transcripts. Recognizes a hairpin structure at the 5'-LTR of the nascent viral mRNAs referred to as the transactivation responsive RNA element (TAR) and recruits the cyclin T1-CDK9 complex (P-TEFb complex) that will in turn hyperphosphorylate the RNA polymerase II to allow efficient elongation. The CDK9 component of P-TEFb and other Tat-activated kinases hyperphosphorylate the C-terminus of RNA Pol II that becomes stabilized and much more processive. Other factors such as HTATSF1/Tat-SF1, SUPT5H/SPT5, and HTATIP2 are also important for Tat's function. Besides its effect on RNA Pol II processivity, Tat induces chromatin remodeling of proviral genes by recruiting the histone acetyltransferases (HATs) CREBBP, EP300 and PCAF to the chromatin. This also contributes to the increase in proviral transcription rate, especially when the provirus integrates in transcriptionally silent region of the host genome. To ensure maximal activation of the LTR, Tat mediates nuclear translocation of NF-kappa-B by interacting with host RELA. Through its interaction with host TBP, Tat may also modulate transcription initiation. Tat can reactivate a latently infected cell by penetrating in it and transactivating its LTR promoter. In the cytoplasm, Tat is thought to act as a translational activator of HIV-1 mRNAs. Its function is as follows. Extracellular circulating Tat can be endocytosed by surrounding uninfected cells via the binding to several surface receptors such as CD26, CXCR4, heparan sulfate proteoglycans (HSPG) or LDLR. Neurons are rarely infected, but they internalize Tat via their LDLR. Through its interaction with nuclear HATs, Tat is potentially able to control the acetylation-dependent cellular gene expression. Modulates the expression of many cellular genes involved in cell survival, proliferation or in coding for cytokines or cytokine receptors. Tat plays a role in T-cell and neurons apoptosis. Tat induced neurotoxicity and apoptosis probably contribute to neuroAIDS. Circulating Tat also acts as a chemokine-like and/or growth factor-like molecule that binds to specific receptors on the surface of the cells, affecting many cellular pathways. In the vascular system, Tat binds to ITGAV/ITGB3 and ITGA5/ITGB1 integrins dimers at the surface of endothelial cells and competes with bFGF for heparin-binding sites, leading to an excess of soluble bFGF. The chain is Protein Tat from Human immunodeficiency virus type 1 group M subtype H (isolate VI991) (HIV-1).